A 387-amino-acid polypeptide reads, in one-letter code: Exodeoxyribonuclease 7 large subunit (387 aa).

It belongs to the XseA family. In terms of assembly, heterooligomer composed of large and small subunits.

It is found in the cytoplasm. It carries out the reaction Exonucleolytic cleavage in either 5'- to 3'- or 3'- to 5'-direction to yield nucleoside 5'-phosphates.. In terms of biological role, bidirectionally degrades single-stranded DNA into large acid-insoluble oligonucleotides, which are then degraded further into small acid-soluble oligonucleotides. The polypeptide is Exodeoxyribonuclease 7 large subunit (Campylobacter fetus subsp. fetus (strain 82-40)).